We begin with the raw amino-acid sequence, 199 residues long: Recombination protein RecR (199 aa).

The C4-type zinc-finger motif lies at 58-73 (CQTCHHLSAEPTCEIC). One can recognise a Toprim domain in the interval 81-175 (GQICVVADSR…RVSRIAYGLP (95 aa)).

This sequence belongs to the RecR family.

Functionally, may play a role in DNA repair. It seems to be involved in an RecBC-independent recombinational process of DNA repair. It may act with RecF and RecO. In Synechococcus sp. (strain WH7803), this protein is Recombination protein RecR.